We begin with the raw amino-acid sequence, 433 residues long: Enolase (433 aa).

Gln163 serves as a coordination point for (2R)-2-phosphoglycerate. Glu205 acts as the Proton donor in catalysis. Residues Asp242, Glu286, and Asp313 each contribute to the Mg(2+) site. 4 residues coordinate (2R)-2-phosphoglycerate: Lys338, Arg367, Ser368, and Lys389. The active-site Proton acceptor is Lys338.

Belongs to the enolase family. Requires Mg(2+) as cofactor.

It is found in the cytoplasm. The protein localises to the secreted. It localises to the cell surface. The catalysed reaction is (2R)-2-phosphoglycerate = phosphoenolpyruvate + H2O. The protein operates within carbohydrate degradation; glycolysis; pyruvate from D-glyceraldehyde 3-phosphate: step 4/5. Functionally, catalyzes the reversible conversion of 2-phosphoglycerate (2-PG) into phosphoenolpyruvate (PEP). It is essential for the degradation of carbohydrates via glycolysis. This is Enolase from Koribacter versatilis (strain Ellin345).